Consider the following 294-residue polypeptide: tRNA pseudouridine synthase B (294 aa).

D39 functions as the Nucleophile in the catalytic mechanism.

The protein belongs to the pseudouridine synthase TruB family. Type 1 subfamily.

It carries out the reaction uridine(55) in tRNA = pseudouridine(55) in tRNA. In terms of biological role, responsible for synthesis of pseudouridine from uracil-55 in the psi GC loop of transfer RNAs. The protein is tRNA pseudouridine synthase B of Streptococcus pyogenes serotype M6 (strain ATCC BAA-946 / MGAS10394).